A 142-amino-acid polypeptide reads, in one-letter code: Large ribosomal subunit protein uL13 (142 aa).

The protein belongs to the universal ribosomal protein uL13 family. Part of the 50S ribosomal subunit.

This protein is one of the early assembly proteins of the 50S ribosomal subunit, although it is not seen to bind rRNA by itself. It is important during the early stages of 50S assembly. In Vibrio campbellii (strain ATCC BAA-1116), this protein is Large ribosomal subunit protein uL13.